Reading from the N-terminus, the 293-residue chain is tRNA pseudouridine synthase B (293 aa).

Aspartate 38 (nucleophile) is an active-site residue.

Belongs to the pseudouridine synthase TruB family. Type 1 subfamily.

It carries out the reaction uridine(55) in tRNA = pseudouridine(55) in tRNA. Its function is as follows. Responsible for synthesis of pseudouridine from uracil-55 in the psi GC loop of transfer RNAs. This Nostoc sp. (strain PCC 7120 / SAG 25.82 / UTEX 2576) protein is tRNA pseudouridine synthase B.